The following is a 322-amino-acid chain: Probable cAMP-dependent protein kinase catalytic subunit (322 aa).

The region spanning 7-261 is the Protein kinase domain; that stretch reads FEFVKVVGVG…ICEIMGHPFF (255 aa). ATP-binding positions include 13 to 21 and K37; that span reads VGVGAFGKV. D132 functions as the Proton acceptor in the catalytic mechanism. Residues 262–322 form the AGC-kinase C-terminal domain; the sequence is KGIDWHEVES…KHLYKVSKGL (61 aa).

The protein belongs to the protein kinase superfamily. AGC Ser/Thr protein kinase family. cAMP subfamily.

It catalyses the reaction L-seryl-[protein] + ATP = O-phospho-L-seryl-[protein] + ADP + H(+). It carries out the reaction L-threonyl-[protein] + ATP = O-phospho-L-threonyl-[protein] + ADP + H(+). This chain is Probable cAMP-dependent protein kinase catalytic subunit, found in Encephalitozoon cuniculi (strain GB-M1) (Microsporidian parasite).